The chain runs to 335 residues: Serpentine receptor class XA 10 (335 aa).

Residues 1–10 (MDVDAAVVKR) are Extracellular-facing. Residues 11-31 (IALWVYETCSVFNLFYCITLS) form a helical membrane-spanning segment. The Cytoplasmic segment spans residues 32-46 (LAIKTSKNNALPATY). The chain crosses the membrane as a helical span at residues 47–67 (IYNMAISNALLVIFGIMVYIL). At 68–82 (PYYMSDKTYKTYRDS) the chain is on the extracellular side. A helical membrane pass occupies residues 83-103 (IGAMISVGVTFNYLHPMLTLI). At 104-126 (LMTINRIAVVVSMQASQLFTSSK) the chain is on the cytoplasmic side. The helical transmembrane segment at 127-147 (IWLYTSFHMTANFACLIIPYL) threads the bilayer. At 148-177 (SECRINYDIRKVGFISECAPDRHQITTFSN) the chain is on the extracellular side. Residues 178 to 198 (YYSVFFPFVAFFFNVLVIINF) form a helical membrane-spanning segment. The Cytoplasmic portion of the chain corresponds to 199-238 (KLQRSPTYTKIKNMFRRGNGDQFTSMPSDVLKAKKKTERM). The chain crosses the membrane as a helical span at residues 239–259 (LMIQAFITAFYLSVYELTSLV). Over 260 to 276 (LRVVPELFGNLSLDGKL) the chain is Extracellular. The chain crosses the membrane as a helical span at residues 277–297 (AFTYFRLAQVPCHVFLVYFIF). At 298–319 (TPVTRKIYMDFVRERVFCMKPA) the chain is on the cytoplasmic side.

This sequence belongs to the nematode receptor-like protein srxa family.

Its subcellular location is the membrane. This chain is Serpentine receptor class XA 10 (srxa-10), found in Caenorhabditis elegans.